Consider the following 178-residue polypeptide: Bifunctional protein PyrR (178 aa).

Residues 99 to 111 carry the PRPP-binding motif; sequence VILVDDVLFTGRT.

The protein belongs to the purine/pyrimidine phosphoribosyltransferase family. PyrR subfamily. In terms of assembly, homodimer and homohexamer; in equilibrium.

It catalyses the reaction UMP + diphosphate = 5-phospho-alpha-D-ribose 1-diphosphate + uracil. Its function is as follows. Regulates transcriptional attenuation of the pyrimidine nucleotide (pyr) operon by binding in a uridine-dependent manner to specific sites on pyr mRNA. This disrupts an antiterminator hairpin in the RNA and favors formation of a downstream transcription terminator, leading to a reduced expression of downstream genes. In terms of biological role, also displays a weak uracil phosphoribosyltransferase activity which is not physiologically significant. This chain is Bifunctional protein PyrR, found in Ligilactobacillus salivarius (strain UCC118) (Lactobacillus salivarius).